The chain runs to 526 residues: Bifunctional purine biosynthesis protein PurH (526 aa).

An MGS-like domain is found at 1 to 147; the sequence is MPSIKRALIS…KNWKHVAIVT (147 aa).

It belongs to the PurH family.

It catalyses the reaction (6R)-10-formyltetrahydrofolate + 5-amino-1-(5-phospho-beta-D-ribosyl)imidazole-4-carboxamide = 5-formamido-1-(5-phospho-D-ribosyl)imidazole-4-carboxamide + (6S)-5,6,7,8-tetrahydrofolate. The catalysed reaction is IMP + H2O = 5-formamido-1-(5-phospho-D-ribosyl)imidazole-4-carboxamide. The protein operates within purine metabolism; IMP biosynthesis via de novo pathway; 5-formamido-1-(5-phospho-D-ribosyl)imidazole-4-carboxamide from 5-amino-1-(5-phospho-D-ribosyl)imidazole-4-carboxamide (10-formyl THF route): step 1/1. It functions in the pathway purine metabolism; IMP biosynthesis via de novo pathway; IMP from 5-formamido-1-(5-phospho-D-ribosyl)imidazole-4-carboxamide: step 1/1. The chain is Bifunctional purine biosynthesis protein PurH from Neisseria meningitidis serogroup C / serotype 2a (strain ATCC 700532 / DSM 15464 / FAM18).